A 196-amino-acid chain; its full sequence is Phosphate-specific transport system accessory protein PhoU homolog (196 aa).

The protein belongs to the PhoU family. In terms of assembly, homodimer.

It localises to the cytoplasm. In terms of biological role, plays a role in the regulation of phosphate uptake. The polypeptide is Phosphate-specific transport system accessory protein PhoU homolog (Archaeoglobus fulgidus (strain ATCC 49558 / DSM 4304 / JCM 9628 / NBRC 100126 / VC-16)).